The following is a 137-amino-acid chain: Small heat shock protein IbpA (137 aa).

Residues 28-137 form the sHSP domain; it reads SQSNGGYPPY…AKKPRRIEIN (110 aa).

The protein belongs to the small heat shock protein (HSP20) family. As to quaternary structure, monomer. Forms homomultimers of about 100-150 subunits at optimal growth temperatures. Conformation changes to monomers at high temperatures or high ionic concentrations.

It is found in the cytoplasm. Functionally, associates with aggregated proteins, together with IbpB, to stabilize and protect them from irreversible denaturation and extensive proteolysis during heat shock and oxidative stress. Aggregated proteins bound to the IbpAB complex are more efficiently refolded and reactivated by the ATP-dependent chaperone systems ClpB and DnaK/DnaJ/GrpE. Its activity is ATP-independent. The protein is Small heat shock protein IbpA of Shigella sonnei (strain Ss046).